Reading from the N-terminus, the 1441-residue chain is uncharacterized protein (1441 aa).

Disordered stretches follow at residues Met-1–Ser-95, Asn-150–Phe-204, Lys-224–Glu-289, His-401–Gln-477, Arg-529–Gln-661, Leu-680–Thr-760, Arg-776–Gln-810, Gln-849–Leu-899, Arg-980–Asn-1118, Lys-1161–Asn-1185, Asn-1209–Tyr-1321, Gly-1348–Phe-1402, and Leu-1421–Glu-1441. Low complexity predominate over residues Asn-19–Asn-38. Positions Gln-39–Met-56 are enriched in polar residues. Composition is skewed to low complexity over residues Ser-57 to Asn-91, Ile-153 to Pro-187, Gln-227 to Asn-283, Asn-416 to Asn-445, Gly-555 to Asn-564, and Asn-572 to Thr-635. The span at Ala-636–Ser-645 shows a compositional bias: polar residues. Low complexity-rich tracts occupy residues Gln-648–Gln-661 and Leu-680–Asn-700. Residues Ser-703–Lys-720 show a composition bias toward basic and acidic residues. Polar residues predominate over residues Glu-729 to Ser-751. 2 stretches are compositionally biased toward low complexity: residues Asp-780 to Gln-810 and Gln-849 to Ser-880. Over residues Ile-881–Val-892 the composition is skewed to gly residues. Over residues Gly-981 to Pro-994 the composition is skewed to polar residues. The segment covering Asn-995 to Asn-1067 has biased composition (low complexity). The segment covering Asp-1068–Gly-1087 has biased composition (polar residues). Residues Ser-1088–Asn-1118 are compositionally biased toward low complexity. Composition is skewed to low complexity over residues Asp-1225–Asn-1249 and Asn-1257–Glu-1291. Basic and acidic residues predominate over residues Arg-1362–Asp-1373.

This is an uncharacterized protein from Dictyostelium discoideum (Social amoeba).